The following is a 419-amino-acid chain: Serine hydroxymethyltransferase (419 aa).

(6S)-5,6,7,8-tetrahydrofolate is bound by residues Leu121 and 125–127 (GHL). Lys229 is modified (N6-(pyridoxal phosphate)lysine).

The protein belongs to the SHMT family. In terms of assembly, homodimer. It depends on pyridoxal 5'-phosphate as a cofactor.

It is found in the cytoplasm. The enzyme catalyses (6R)-5,10-methylene-5,6,7,8-tetrahydrofolate + glycine + H2O = (6S)-5,6,7,8-tetrahydrofolate + L-serine. It participates in one-carbon metabolism; tetrahydrofolate interconversion. The protein operates within amino-acid biosynthesis; glycine biosynthesis; glycine from L-serine: step 1/1. Its function is as follows. Catalyzes the reversible interconversion of serine and glycine with tetrahydrofolate (THF) serving as the one-carbon carrier. This reaction serves as the major source of one-carbon groups required for the biosynthesis of purines, thymidylate, methionine, and other important biomolecules. Also exhibits THF-independent aldolase activity toward beta-hydroxyamino acids, producing glycine and aldehydes, via a retro-aldol mechanism. This Histophilus somni (strain 2336) (Haemophilus somnus) protein is Serine hydroxymethyltransferase.